The chain runs to 340 residues: N(4)-(Beta-N-acetylglucosaminyl)-L-asparaginase (340 aa).

The signal sequence occupies residues 1–45; sequence MRIIYKQQTMNNNRRDFIKKLGIATAAIAINPLEAKNLLDTSEPK. Threonine 197 (nucleophile) is an active-site residue. Residues 225–228 and 248–251 contribute to the substrate site; these read RVGD and TGHG.

The protein belongs to the Ntn-hydrolase family. As to quaternary structure, heterotetramer of two alpha and two beta chains arranged as a dimer of alpha/beta heterodimers. Post-translationally, cleaved into an alpha and beta chain by autocatalysis; this activates the enzyme. The N-terminal residue of the beta subunit is responsible for the nucleophile hydrolase activity.

The protein localises to the periplasm. It catalyses the reaction N(4)-(beta-N-acetyl-D-glucosaminyl)-L-asparagine + H2O = N-acetyl-beta-D-glucosaminylamine + L-aspartate + H(+). Functionally, cleaves the GlcNAc-Asn bond which joins oligosaccharides to the peptide of asparagine-linked glycoproteins. Requires that the glycosylated asparagine moiety is not substituted on its N-(R1) and C- (R2) terminus. This is N(4)-(Beta-N-acetylglucosaminyl)-L-asparaginase from Elizabethkingia miricola (Chryseobacterium miricola).